The chain runs to 284 residues: uncharacterized protein (284 aa).

The segment covering 1–10 (MSNSVTNFEM) has biased composition (polar residues). Positions 1 to 28 (MSNSVTNFEMSSVLPGKKPCQGKNNESQ) are disordered.

This is an uncharacterized protein from Escherichia coli (strain K12).